The sequence spans 228 residues: E3 ubiquitin-protein ligase RNF114 (228 aa).

An RING-type zinc finger spans residues C29 to R68. Residues C91 and C94 each contribute to the Zn(2+) site. The C2HC RNF-type zinc finger occupies C91–C110. K102 bears the N6-acetyllysine mark. Zn(2+) is bound by residues H106 and C110. At K112 the chain carries N6-acetyllysine.

Interacts with XAF1, the interaction increases XAF1 stability and proapoptotic effects, and may regulate IFN signaling. Post-translationally, autoubiquitinated. Polyubiquitinated in the presence of E2 enzymes UBE2D1, UBE2D2 and UBE2D3, but only monoubiquitinated in the presence of UBE2E1.

It localises to the cytoplasm. It is found in the nucleus. The catalysed reaction is S-ubiquitinyl-[E2 ubiquitin-conjugating enzyme]-L-cysteine + [acceptor protein]-L-lysine = [E2 ubiquitin-conjugating enzyme]-L-cysteine + N(6)-ubiquitinyl-[acceptor protein]-L-lysine.. Its pathway is protein modification; protein ubiquitination. Its function is as follows. E3 ubiquitin-protein ligase that promotes the ubiquitination of various substrates. In turn, participates in the regulation of many biological processes including cell cycle, apoptosis, osteoclastogenesis as well as innate or adaptive immunity. Acts as negative regulator of NF-kappa-B-dependent transcription by promoting the ubiquitination and stabilization of the NF-kappa-B inhibitor TNFAIP3. May promote the ubiquitination of TRAF6 as well. Also acts as a negative regulator of T-cell activation. Inhibits cellular dsRNA responses and interferon production by targeting MAVS component for proteasomal degradation. Ubiquitinates the CDK inhibitor CDKN1A leading to its degradationand probably also CDKN1B and CDKN1C. This activity stimulates cell cycle G1-to-S phase transition and suppresses cellular senescence. May play a role in spermatogenesis. In Pan troglodytes (Chimpanzee), this protein is E3 ubiquitin-protein ligase RNF114 (RNF114).